We begin with the raw amino-acid sequence, 510 residues long: MIWHVQNENFILDSTRIFMKAFHLLLFHGSFIFPECILIFGLILLLMIDLTSDQKDIPWLYFISSTSLVMSIAALLFRWREEPMISFSGNFQTNNFNEIFQFLILLCSTLCIPLSVEYIECTEMAITEFLLFVLTATLGGMFLCGANDLITIFVAPECFSLCSYLLSGYTKRDVRSNEATMKYLLMGGASSSILVHGFSWLYGSSGGEIELQEIANGLINTQMYNSPGISIALIFITVGIGFKLSLAPSHQWTPDVYEGSPTPVVAFLSVTSKVAASALATRIFDIPFYFSSNEWHLLLEILAILSMILGNLIAITQTSMKRMLAYSSIGQIGYVIIGIIVGDSNDGYASMITYMLFYISMNLGTFACIVSFGLRTGTDNIRDYAGLYTKDPFLALSLALCLLSLGGLPPLAGFFGKLHLFWCGWQAGLYFLVSIGLLTSVVSIYYYLKIIKLLMTGRNQEITPHVRNYRRSPLRSNNSIELSMIVCVIASTIPGISMNPIIAIAQDTLF.

13 helical membrane passes run 24–44, 57–77, 99–119, 124–144, 149–169, 183–203, 227–247, 295–315, 323–343, 354–374, 395–415, 418–438, and 484–504; these read LLLFHGSFIFPECILIFGLIL, IPWLYFISSTSLVMSIAALLF, IFQFLILLCSTLCIPLSVEYI, MAITEFLLFVLTATLGGMFLC, LITIFVAPECFSLCSYLLSGY, YLLMGGASSSILVHGFSWLYG, PGISIALIFITVGIGFKLSLA, WHLLLEILAILSMILGNLIAI, MLAYSSIGQIGYVIIGIIVGD, YMLFYISMNLGTFACIVSFGL, ALSLALCLLSLGGLPPLAGFF, LHLFWCGWQAGLYFLVSIGLL, and MIVCVIASTIPGISMNPIIAI.

This sequence belongs to the complex I subunit 2 family. In terms of assembly, NDH is composed of at least 16 different subunits, 5 of which are encoded in the nucleus.

It is found in the plastid. It localises to the chloroplast thylakoid membrane. The enzyme catalyses a plastoquinone + NADH + (n+1) H(+)(in) = a plastoquinol + NAD(+) + n H(+)(out). The catalysed reaction is a plastoquinone + NADPH + (n+1) H(+)(in) = a plastoquinol + NADP(+) + n H(+)(out). In terms of biological role, NDH shuttles electrons from NAD(P)H:plastoquinone, via FMN and iron-sulfur (Fe-S) centers, to quinones in the photosynthetic chain and possibly in a chloroplast respiratory chain. The immediate electron acceptor for the enzyme in this species is believed to be plastoquinone. Couples the redox reaction to proton translocation, and thus conserves the redox energy in a proton gradient. The polypeptide is NAD(P)H-quinone oxidoreductase subunit 2 A, chloroplastic (Ranunculus macranthus (Large buttercup)).